Reading from the N-terminus, the 72-residue chain is FPQPQEPFPQQPQQPFPLQPQQPFPQQPQQPFPQPQQPFRQQAELIIPQQPQQPFPLQPHQPYTQQTIWSMV.

Residues F1–Q36 are compositionally biased toward pro residues. Residues F1–Q61 form a disordered region. Over residues Q37 to Q50 the composition is skewed to low complexity.

Developing endosperm.

Functionally, sulfur-poor seed storage protein. The polypeptide is C-hordein (Hordeum vulgare (Barley)).